Consider the following 1627-residue polypeptide: DNA topoisomerase 2-beta (1627 aa).

ATP is bound by residues Asn117, Asn146, 174 to 176 (SSN), and 187 to 194 (GRNGYGAK). An interaction with DNA region spans residues 368–370 (KKK). 402 to 404 (QTK) contributes to the ATP binding site. One can recognise a Toprim domain in the interval 481 to 598 (CTLILTEGDS…SLLKHGFLEE (118 aa)). Residues Glu487, Asp567, and Asp569 each coordinate Mg(2+). The 454-residue stretch at 741-1194 (IPSLVDGLKP…SASDLWKEDL (454 aa)) folds into the Topo IIA-type catalytic domain. The active-site O-(5'-phospho-DNA)-tyrosine intermediate is Tyr831. An interaction with DNA region spans residues 1016–1025 (KLQTSLTCNS). Disordered stretches follow at residues 1115–1144 (AWKE…GSTS), 1224–1248 (KVGK…RRIV), 1283–1365 (EFGG…DSLL), and 1378–1627 (DFSK…DMFN). The segment covering 1131–1144 (NANDDASSASGSTS) has biased composition (low complexity). Residues 1296 to 1305 (TVNTAASGTK) are compositionally biased toward polar residues. The segment covering 1339–1349 (PWSDDESKSES) has biased composition (basic and acidic residues). Composition is skewed to acidic residues over residues 1381–1392 (KEEDDAHDDDDA) and 1412–1428 (REDE…DEYD). Basic and acidic residues-rich tracts occupy residues 1436-1448 (PSPE…KKNQ) and 1462-1471 (KTDDDTTKLD). 2 stretches are compositionally biased toward basic residues: residues 1542-1552 (GKGRGAKKRKT) and 1566-1578 (KAPK…KSKK). The span at 1616 to 1627 (ESDEDDDFDMFN) shows a compositional bias: acidic residues.

Belongs to the type II topoisomerase family. Homodimer. Requires Mg(2+) as cofactor. Mn(2+) serves as cofactor. It depends on Ca(2+) as a cofactor.

Its subcellular location is the nucleus. It is found in the nucleolus. The protein localises to the nucleoplasm. The enzyme catalyses ATP-dependent breakage, passage and rejoining of double-stranded DNA.. Key decatenating enzyme that alters DNA topology by binding to two double-stranded DNA molecules, generating a double-stranded break in one of the strands, passing the intact strand through the broken strand, and religating the broken strand. Plays a role in B-cell differentiation. The polypeptide is DNA topoisomerase 2-beta (TOP2B) (Gallus gallus (Chicken)).